A 452-amino-acid chain; its full sequence is Phosphoglucosamine mutase (452 aa).

S103 functions as the Phosphoserine intermediate in the catalytic mechanism. Mg(2+) is bound by residues S103, D243, D245, and D247. S103 carries the post-translational modification Phosphoserine.

Belongs to the phosphohexose mutase family. It depends on Mg(2+) as a cofactor. In terms of processing, activated by phosphorylation.

It catalyses the reaction alpha-D-glucosamine 1-phosphate = D-glucosamine 6-phosphate. In terms of biological role, catalyzes the conversion of glucosamine-6-phosphate to glucosamine-1-phosphate. The sequence is that of Phosphoglucosamine mutase from Limosilactobacillus fermentum (strain NBRC 3956 / LMG 18251) (Lactobacillus fermentum).